Reading from the N-terminus, the 373-residue chain is GDP-mannose 4,6 dehydratase 2 (373 aa).

The segment covering 1-15 (MASENNGSRSDSESI) has biased composition (polar residues). The tract at residues 1 to 21 (MASENNGSRSDSESITAPKAD) is disordered. NADP(+) is bound by residues 35-40 (GITGQD), arginine 60, 91-92 (DL), 113-117 (LAAQS), and tyrosine 128. Serine 117 provides a ligand contact to substrate. Residue serine 162 participates in substrate binding. Serine 162 is an active-site residue. Residues glutamate 164 and tyrosine 185 each act as nucleophile in the active site. A substrate-binding site is contributed by tyrosine 185. Lysine 189 is a binding site for NADP(+). Residue asparagine 214 coordinates substrate. Histidine 215 and arginine 220 together coordinate NADP(+). Residues 220-228 (RGENFVTRK), glycine 247, arginine 253, and 314-317 (RPAE) contribute to the substrate site.

This sequence belongs to the NAD(P)-dependent epimerase/dehydratase family. GDP-mannose 4,6-dehydratase subfamily. As to quaternary structure, homotetramer. Binds to GER1. It depends on NADP(+) as a cofactor. In terms of tissue distribution, expressed in roots, flowers, siliques, leaves and stems. Not expressed in the root meristem and the proximal part of the elongation zone, or in emerging lateral roots. Expressed in trichomes and guard cells, and in pollen just before anthesis.

It catalyses the reaction GDP-alpha-D-mannose = GDP-4-dehydro-alpha-D-rhamnose + H2O. It participates in nucleotide-sugar biosynthesis; GDP-L-fucose biosynthesis via de novo pathway; GDP-L-fucose from GDP-alpha-D-mannose: step 1/2. Functionally, catalyzes the conversion of GDP-D-mannose to GDP-4-dehydro-6-deoxy-D-mannose. The chain is GDP-mannose 4,6 dehydratase 2 (MUR1) from Arabidopsis thaliana (Mouse-ear cress).